We begin with the raw amino-acid sequence, 182 residues long: Ribosome-recycling factor (182 aa).

The protein belongs to the RRF family.

The protein resides in the cytoplasm. Functionally, responsible for the release of ribosomes from messenger RNA at the termination of protein biosynthesis. May increase the efficiency of translation by recycling ribosomes from one round of translation to another. This is Ribosome-recycling factor from Hydrogenobaculum sp. (strain Y04AAS1).